Reading from the N-terminus, the 480-residue chain is MVKICCIGAGYVGGPTMAVIALKCPSVEVAVVDISVPRINAWNSDQLPIYEPGLDDVVKQCRGKNLFFSTDVEKHVREADIVFVSVNTPTKTRGLGAGKAADLTYWESAARMIADVSVSDKIVVEKSTVPVKTAEAIEKILTHNSKGIKFQILSNPEFLAEGTAIEDLFMPDRVLIGGRETTEGFAAVKALKDIYAQWVPEERILTTNLWSAELSKLAANAFLAQRISSVNAMSALCEATGANVSEVSYAVGKDSRIGPKFLNSSVGFGGSCFQKDILNLVYICECNGLPEVAEYWKQVIKINDYQKTRFVNRIVSSMFNTVSNKKIAVLGFAFKKDTGDTRETPAIDVCKGLLGDKARLSIYDPQVTEEQIQRDLTMNKFDWDHPLHLQPMSPTTVKQVSVAWDAYTATKDAHGICILTEWDEFKKLDFQRIFENMQKPAFVFDGRNVVDADKLREIGFIVYSIGKPLDQWLKDMPALA.

Residues 8-13, Asp-33, Arg-38, 86-90, 127-128, and Glu-161 each bind NAD(+); these read GAGYVG, VNTPT, and ST. Substrate-binding positions include 157 to 161, 216 to 223, and 256 to 269; these read EFLAE, KLAANAFL, and RIGPKFLNSSVGFG. The active-site Nucleophile is Cys-272. 272 to 275 provides a ligand contact to NAD(+); the sequence is CFQK. Position 334–335 (334–335) interacts with substrate; that stretch reads FK. Arg-342 provides a ligand contact to NAD(+). Residue Arg-447 participates in substrate binding.

It belongs to the UDP-glucose/GDP-mannose dehydrogenase family.

It catalyses the reaction UDP-alpha-D-glucose + 2 NAD(+) + H2O = UDP-alpha-D-glucuronate + 2 NADH + 3 H(+). It participates in nucleotide-sugar biosynthesis; UDP-alpha-D-glucuronate biosynthesis; UDP-alpha-D-glucuronate from UDP-alpha-D-glucose: step 1/1. With respect to regulation, inhibited by UDP-xylose. Its function is as follows. Involved in the biosynthesis of UDP-glucuronic acid (UDP-GlcA), providing nucleotide sugars for cell-wall polymers. Required for the formation of cell wall ingrowths on the outer cell walls of nematode-induced syncytia. This is UDP-glucose 6-dehydrogenase 3 (UGD3) from Arabidopsis thaliana (Mouse-ear cress).